The chain runs to 229 residues: Stage III sporulation protein AG (229 aa).

The chain crosses the membrane as a helical span at residues 30–50; the sequence is YHYFLFVFVLGVSFMLVSQLF. Disordered regions lie at residues 64–93 and 136–159; these read AVSS…KDSI and SNKN…DQSS. Positions 71–93 are enriched in basic and acidic residues; that stretch reads ADSKEKTAEVFKASKSDKPKDSI.

Its subcellular location is the cell membrane. This is Stage III sporulation protein AG (spoIIIAG) from Bacillus subtilis (strain 168).